Reading from the N-terminus, the 324-residue chain is G patch domain-containing protein 4 (324 aa).

Disordered stretches follow at residues 1 to 30 and 123 to 324; these read MSAS…GKGL and LSGG…NKSE. In terms of domain architecture, G-patch spans 11–57; the sequence is GMKFAEEQMHKHGWKEGKGLGRRENGICEAIKVKVKCDHAGVGHNSA. Basic and acidic residues predominate over residues 14–30; the sequence is FAEEQMHKHGWKEGKGL. Positions 131–141 are enriched in low complexity; sequence KEPSSSESSDS. Residues 186–215 show a composition bias toward basic and acidic residues; it reads SRLEEQEREFLAKYGKKEQKNKERDEKLER. A compositionally biased stretch (basic residues) spans 244–253; the sequence is HKKKKKKRKR. Residues 254–270 are compositionally biased toward basic and acidic residues; it reads ADSERKEESQENGHEEE. The segment covering 296 to 309 has biased composition (polar residues); the sequence is PSTQEEQPTESSDF. A compositionally biased stretch (basic residues) spans 312–324; sequence KPKKKKKKKNKSE.

The sequence is that of G patch domain-containing protein 4 (gpatch4) from Xenopus laevis (African clawed frog).